A 247-amino-acid polypeptide reads, in one-letter code: Acetoacetate decarboxylase 1 (247 aa).

Residue lysine 116 is the Schiff-base intermediate with acetoacetate of the active site.

The protein belongs to the ADC family.

It carries out the reaction acetoacetate + H(+) = acetone + CO2. Its function is as follows. Catalyzes the conversion of acetoacetate to acetone and carbon dioxide. This is Acetoacetate decarboxylase 1 from Mesorhizobium japonicum (strain LMG 29417 / CECT 9101 / MAFF 303099) (Mesorhizobium loti (strain MAFF 303099)).